The following is a 152-amino-acid chain: TOMM20-like protein 1 (152 aa).

Topologically, residues 1 to 9 (MPSVRSLLR) are mitochondrial intermembrane. Residues 10–29 (LLAAAAACGAFAFLGYCIYL) form a helical membrane-spanning segment. The Cytoplasmic portion of the chain corresponds to 30-152 (NRKRRGDPAF…EQDCLEDDPD (123 aa)). The disordered stretch occupies residues 43 to 62 (LRDKRRAEPQKAEEQGTQLW). The span at 47 to 56 (RRAEPQKAEE) shows a compositional bias: basic and acidic residues.

Belongs to the Tom20 family.

It is found in the mitochondrion outer membrane. The chain is TOMM20-like protein 1 (TOMM20L) from Homo sapiens (Human).